A 384-amino-acid polypeptide reads, in one-letter code: MNAPTPAPSPVDVIPAPVGLLAELTHRCPLRCPYCSNPLELDRRSAELDTQTWLRVLTEAAGLGVLHVHLSGGEPTARPDIVEITAKCAELGLYSNLITSGVGGALAKLDALYDVGLDHVQLSVQGVDAANAEKIGGLKNAQPQKMQFAARVTELGLPLTLNSVIHRGNIHEVPGFIDLAVKLGAKRLEVAHTQYYGWAYVNRAALMPDKSQVDESIRIVEAARERLKGQLVIDLVVPDYYAKYPKACAGGWGRKLMNVTPQGKVLPCHAAETIPGLEFWYVTDHSLGEIWTQSPAFAAYRGTSWMKEPCRSCDRREKDWGGCRCQALALTGDAANTDPACSLSPLHAKMRDLAKEEAAETPPDYIYRSIGTNVQNPLSEKAPL.

In terms of domain architecture, Radical SAM core spans 14–230 (IPAPVGLLAE…EAARERLKGQ (217 aa)). Positions 28, 32, and 35 each coordinate [4Fe-4S] cluster.

Belongs to the radical SAM superfamily. PqqE family. In terms of assembly, interacts with PqqD. The interaction is necessary for activity of PqqE. Requires [4Fe-4S] cluster as cofactor.

It carries out the reaction [PQQ precursor protein] + S-adenosyl-L-methionine = E-Y cross-linked-[PQQ precursor protein] + 5'-deoxyadenosine + L-methionine + H(+). It participates in cofactor biosynthesis; pyrroloquinoline quinone biosynthesis. Catalyzes the cross-linking of a glutamate residue and a tyrosine residue in the PqqA protein as part of the biosynthesis of pyrroloquinoline quinone (PQQ). The sequence is that of PqqA peptide cyclase from Methylorubrum extorquens (strain CM4 / NCIMB 13688) (Methylobacterium extorquens).